Consider the following 103-residue polypeptide: uncharacterized protein (103 aa).

This is an uncharacterized protein from Dictyostelium discoideum (Social amoeba).